Reading from the N-terminus, the 368-residue chain is F-box only protein 28 (368 aa).

A compositionally biased stretch (basic and acidic residues) spans 1–11 (MAAAAEERMAE). Residues 1-56 (MAAAAEERMAEEGGGGQGDGGSSLASGSTQRQPPPPAPQHPQPGSQALPAPALAPD) are disordered. Over residues 12–21 (EGGGGQGDGG) the composition is skewed to gly residues. A compositionally biased stretch (low complexity) spans 22–31 (SSLASGSTQR). Positions 32 to 41 (QPPPPAPQHP) are enriched in pro residues. A compositionally biased stretch (low complexity) spans 42–56 (QPGSQALPAPALAPD). One can recognise an F-box domain in the interval 61–109 (NNTLVALPIVAIENILSFMSYDEISQLRLVCKRMDLVCQRMLNQGFLKV). Phosphoserine is present on residues Ser235 and Ser242. Position 270 is a phosphothreonine (Thr270). Residues 328 to 368 (MESAVGNSSGSGQNEESPRKRKKATEAIDSLRKSKRLRNRK) are disordered. Low complexity predominate over residues 333–342 (GNSSGSGQNE). Ser344 bears the Phosphoserine mark.

In terms of assembly, part of a SCF (SKP1-cullin-F-box) protein ligase complex.

It is found in the chromosome. Its subcellular location is the centromere. The protein localises to the kinetochore. In terms of biological role, probably recognizes and binds to some phosphorylated proteins and promotes their ubiquitination and degradation. This is F-box only protein 28 (FBXO28) from Homo sapiens (Human).